The following is a 153-amino-acid chain: Protein SprT-like (153 aa).

The SprT-like domain occupies 6 to 148; the sequence is LQQLTEQLSL…CGKCGGKIKE (143 aa). H67 serves as a coordination point for Zn(2+). E68 is an active-site residue. H71 is a binding site for Zn(2+).

It belongs to the SprT family. Requires Zn(2+) as cofactor.

The protein localises to the cytoplasm. The chain is Protein SprT-like from Bacillus licheniformis (strain ATCC 14580 / DSM 13 / JCM 2505 / CCUG 7422 / NBRC 12200 / NCIMB 9375 / NCTC 10341 / NRRL NRS-1264 / Gibson 46).